We begin with the raw amino-acid sequence, 577 residues long: Laccase-17 (577 aa).

Positions 1 to 22 (MALQLLLAVFSCVLLLPQPAFG) are cleaved as a signal peptide. Plastocyanin-like domains follow at residues 30–146 (EIKM…PKRG) and 156–309 (KEVP…YEPP). N-linked (GlcNAc...) asparagine glycosylation is found at Asn-35 and Asn-76. The Cu cation site is built by His-80 and His-82. Asn-112 is a glycosylation site (N-linked (GlcNAc...) asparagine). Residues His-125 and His-127 each contribute to the Cu cation site. N-linked (GlcNAc...) asparagine glycosylation is found at Asn-185, Asn-201, Asn-237, Asn-297, Asn-335, Asn-383, Asn-391, Asn-401, Asn-437, Asn-444, Asn-450, and Asn-460. Residues 427-561 (KFPWSPIVPF…RMAWLVLDGD (135 aa)) form the Plastocyanin-like 3 domain. Cu cation is bound by residues His-478, His-481, His-483, His-540, Cys-541, His-542, and His-546.

This sequence belongs to the multicopper oxidase family. Cu cation is required as a cofactor. Ubiquitous with higher levels in the inflorescence stem.

It is found in the secreted. Its subcellular location is the extracellular space. The protein resides in the apoplast. It carries out the reaction 4 hydroquinone + O2 = 4 benzosemiquinone + 2 H2O. In terms of biological role, lignin degradation and detoxification of lignin-derived products. The polypeptide is Laccase-17 (LAC17) (Arabidopsis thaliana (Mouse-ear cress)).